The primary structure comprises 179 residues: D-glycero-beta-D-manno-heptose-1,7-bisphosphate 7-phosphatase (179 aa).

D7 functions as the Nucleophile in the catalytic mechanism. Residues D7 and D9 each contribute to the Mg(2+) site. D7 contacts substrate. D9 acts as the Proton donor in catalysis. Substrate-binding positions include 15–19, 50–53, and R57; these read DSDAF and TNQS. 4 residues coordinate Zn(2+): C89, H91, C97, and C99. R100 lines the substrate pocket. Mg(2+) is bound at residue D126. R129 is a binding site for substrate.

As to quaternary structure, monomer. Mg(2+) is required as a cofactor. Zn(2+) serves as cofactor.

It localises to the cytoplasm. The catalysed reaction is D-glycero-beta-D-manno-heptose 1,7-bisphosphate + H2O = D-glycero-beta-D-manno-heptose 1-phosphate + phosphate. The protein operates within nucleotide-sugar biosynthesis; ADP-L-glycero-beta-D-manno-heptose biosynthesis; ADP-L-glycero-beta-D-manno-heptose from D-glycero-beta-D-manno-heptose 7-phosphate: step 2/4. It functions in the pathway bacterial outer membrane biogenesis; LPS core biosynthesis. In terms of biological role, converts the D-glycero-beta-D-manno-heptose 1,7-bisphosphate (beta-HBP) intermediate into D-glycero-beta-D-manno-heptose 1-phosphate by removing the phosphate group at the C-7 position. The protein is D-glycero-beta-D-manno-heptose-1,7-bisphosphate 7-phosphatase of Bordetella bronchiseptica (strain ATCC BAA-588 / NCTC 13252 / RB50) (Alcaligenes bronchisepticus).